A 225-amino-acid polypeptide reads, in one-letter code: Helicostatins (225 aa).

The signal sequence occupies residues 1–18 (MLYSSLPVCFLVLGAALC). The propeptide occupies 19 to 48 (APERMQNEAEPHDLQPHEAEPHSDHVAPLA). Residues Leu-58, Leu-79, and Leu-90 each carry the leucine amide modification. The propeptide occupies 94 to 127 (SVDEDQSNDEQQLTTSDLDQAALAELFDQYDDAE). Leucine amide is present on Leu-137. Positions 141-149 (FADDETSEE) are excised as a propeptide. Residues Leu-159, Leu-170, Leu-181, Leu-192, and Leu-206 each carry the leucine amide modification. The disordered stretch occupies residues 205-225 (GLGKRSGDDVSADDSDNYFDV). A propeptide spanning residues 210-225 (SGDDVSADDSDNYFDV) is cleaved from the precursor. Residues 214 to 225 (VSADDSDNYFDV) show a composition bias toward acidic residues.

It belongs to the allatostatin family. In terms of tissue distribution, highly expressed in the CNS and gut of larvae. Also expressed in the cells of the larval brain and ventral nerve cord and in endocrine cells of the midgut.

Its subcellular location is the secreted. Its function is as follows. May act as a neurotransmitter or neuromodulator. This chain is Helicostatins, found in Helicoverpa armigera (Cotton bollworm).